Reading from the N-terminus, the 168-residue chain is Probable chorismate pyruvate-lyase (168 aa).

Substrate is bound by residues R75, I114, and E155.

Belongs to the UbiC family.

The protein localises to the cytoplasm. The enzyme catalyses chorismate = 4-hydroxybenzoate + pyruvate. It participates in cofactor biosynthesis; ubiquinone biosynthesis. Removes the pyruvyl group from chorismate, with concomitant aromatization of the ring, to provide 4-hydroxybenzoate (4HB) for the ubiquinone pathway. This is Probable chorismate pyruvate-lyase from Psychrobacter arcticus (strain DSM 17307 / VKM B-2377 / 273-4).